The primary structure comprises 93 residues: Mitochondrial import inner membrane translocase subunit Tim10-A (93 aa).

Residues 32–57 carry the Twin CX3C motif motif; sequence CHKKCVPPHYKEAELSKGESVCLDRC. Cystine bridges form between Cys32-Cys57 and Cys36-Cys53.

Belongs to the small Tim family. As to quaternary structure, heterohexamer; composed of 3 copies of TIMM9 and 3 copies of TIMM10/TIM10A, named soluble 70 kDa complex. The complex forms a 6-bladed alpha-propeller structure and associates with the TIMM22 component of the TIM22 complex. Interacts with multi-pass transmembrane proteins in transit.

It localises to the mitochondrion inner membrane. Mitochondrial intermembrane chaperone that participates in the import and insertion of multi-pass transmembrane proteins into the mitochondrial inner membrane. May also be required for the transfer of beta-barrel precursors from the TOM complex to the sorting and assembly machinery (SAM complex) of the outer membrane. Acts as a chaperone-like protein that protects the hydrophobic precursors from aggregation and guide them through the mitochondrial intermembrane space. The protein is Mitochondrial import inner membrane translocase subunit Tim10-A (timm10-a) of Xenopus laevis (African clawed frog).